Here is a 2028-residue protein sequence, read N- to C-terminus: Transient receptor potential cation channel subfamily M member 6 (2028 aa).

The Cytoplasmic portion of the chain corresponds to 1–747 (MQVKKSWIEG…MWMGRLKMRK (747 aa)). Residues 577–601 (QPYKSKEKPEDSQKSKKKSKERQSL) form a disordered region. The segment covering 580–590 (KSKEKPEDSQK) has biased composition (basic and acidic residues). Residues 748–768 (NSWLKIIISILLPPMILTLEF) traverse the membrane as a helical segment. Residues 769 to 847 (KSKAEMSHVP…YEFYSAPFVK (79 aa)) are Extracellular-facing. A helical transmembrane segment spans residues 848 to 868 (FWFYTMAYLAFLMLFTYTVLV). The Cytoplasmic portion of the chain corresponds to 869–910 (EMQPQPSVHEWLVIIYIFTNAIEKVREICISEPSKFKQKVKM). The chain crosses the membrane as a helical span at residues 911–931 (WLSEYWNLMETVAIGLFAVGF). Over 932–945 (GLRWGHPPLQTAGR) the chain is Extracellular. The helical transmembrane segment at 946 to 966 (LIYCIDIIFWFSRLMDFFAVN) threads the bilayer. The Cytoplasmic portion of the chain corresponds to 967–978 (QHAGPYVTMIAK). A helical transmembrane segment spans residues 979-999 (MAANMFYIVIIMAIVLLSFGV). Residues 1000-1018 (ARKAILSPKEPPSWRLARD) are Extracellular-facing. The segment at residues 1019–1039 (IVFEPYWMMYGEVYASDIDVC) is an intramembrane region (pore-forming). At 1040-1053 (SNETSCPPGSFLTP) the chain is on the extracellular side. A helical membrane pass occupies residues 1054 to 1074 (FLQAVYLFVQYIIMVNLLIAC). Residues 1075-2028 (FNNIYLDIKS…RSSLEDHTRL (954 aa)) lie on the Cytoplasmic side of the membrane. 2 stretches are compositionally biased toward basic and acidic residues: residues 1313–1323 (KREASHVREEQ) and 1665–1677 (DHLRQPQENRDKT). Disordered regions lie at residues 1313 to 1339 (KREASHVREEQEEREMEQRTTASGISH) and 1658 to 1694 (RHTTQASDHLRQPQENRDKTPTWNSGSTSLSRSFLTR). The span at 1682–1694 (SGSTSLSRSFLTR) shows a compositional bias: low complexity. Thr-1730 carries the phosphothreonine; by autocatalysis modification. Residues 1756–1986 (TLDKSMSSWS…CCGKLRLPDL (231 aa)) form the Alpha-type protein kinase domain. 5 residues coordinate ADP: Gly-1783, Gly-1784, Leu-1785, Arg-1786, and Lys-1810. The residue at position 1857 (Thr-1857) is a Phosphothreonine; by autocatalysis. ADP-binding residues include Glu-1882 and Met-1885. His-1915 contacts Zn(2+). Asp-1929 (proton acceptor) is an active-site residue. Asp-1939 provides a ligand contact to ADP. Zn(2+)-binding residues include His-1972, Cys-1974, and Cys-1978. Residues 2009–2028 (TEELPERDKNRSSLEDHTRL) form a disordered region. Positions 2012 to 2028 (LPERDKNRSSLEDHTRL) are enriched in basic and acidic residues.

In the C-terminal section; belongs to the protein kinase superfamily. Alpha-type protein kinase family. ALPK subfamily. This sequence in the N-terminal section; belongs to the transient receptor (TC 1.A.4) family. LTrpC subfamily. TRPM6 sub-subfamily. Forms heteromers with TRPM7; TRPM6 increases the current amplitude of TRPM6/7 heteromers as compared to TRPM7 homomers. Interacts (via kinase domain) with RACK1. In terms of processing, autophosphorylated; autophosphorylation controls the protein kinase activity of TRPM6 towards their substrates. Autophosphorylation of Thr-1857 in the kinase domain is essential for the inhibitory effect of RACK1. The C-terminus of TRPM6 is proteolytically cleaved in vivo, in a cell type-specific fashion, releasing the kinase module from the transmembrane domain. The cleaved kinase fragments are translocated to the nucleus to phosphorylate histones and regulate gene expression.

It localises to the cell membrane. Its subcellular location is the apical cell membrane. The protein localises to the nucleus. It catalyses the reaction L-seryl-[protein] + ATP = O-phospho-L-seryl-[protein] + ADP + H(+). The enzyme catalyses L-threonyl-[protein] + ATP = O-phospho-L-threonyl-[protein] + ADP + H(+). It carries out the reaction Mg(2+)(in) = Mg(2+)(out). The catalysed reaction is Ca(2+)(in) = Ca(2+)(out). It catalyses the reaction Zn(2+)(in) = Zn(2+)(out). Strongly inhibited by intracellular Mg(2+); unlikely to be active at physiological levels of intracellular Mg(2+). In the heteromeric TRPM6-TRPM7 channels complexes, TRPM7 are able to offset the very high sensitivity of TRPM6 to cytosolic Mg(2+) to physiologically relevant concentrations, whereas TRPM6 relieve TRPM7 from the inhibitory action of Mg-ATP. Consequently, the association of TRPM6 with TRPM7 allow for high constitutive activity of TRPM6/7 in the presence of physiological levels of Mg(2+) and Mg-ATP. The kinase activity is controlled through the autophosphorylation of a serine/threonine-rich region located to the N-terminal of the catalytic domain. Bifunctional protein that combines an ion channel with an intrinsic kinase domain, enabling it to modulate cellular functions either by conducting ions through the pore or by phosphorylating downstream proteins via its kinase domain. Crucial for Mg(2+) homeostasis. Has an important role in epithelial magnesium transport and in the active Mg(2+) absorption in the gut and kidney. However, whether TRPM6 forms functional homomeric channels by itself or functions primarily as a subunit of heteromeric TRPM6-TRPM7 channels, is still under debate. In terms of biological role, the C-terminal kinase domain can be cleaved from the channel segment in a cell-type-specific fashion. The cleaved kinase fragments can translocate to the nucleus, and bind chromatin-remodeling complex proteins to ultimately phosphorylate specific Ser/Thr residues of histones known to be functionally important for cell differentiation and development. This is Transient receptor potential cation channel subfamily M member 6 (Trpm6) from Mus musculus (Mouse).